A 65-amino-acid chain; its full sequence is MAQEQKQPRKSSEADEAVEAVAETDVSERKEALDSDVDDILDEIDDVLETNAEDFVKSFIQKGGE.

The segment covering 1–13 (MAQEQKQPRKSSE) has biased composition (basic and acidic residues). The disordered stretch occupies residues 1 to 34 (MAQEQKQPRKSSEADEAVEAVAETDVSERKEALD). Residues 21–59 (VAETDVSERKEALDSDVDDILDEIDDVLETNAEDFVKSF) are ARC ATPase binding. A coiled-coil region spans residues 25-49 (DVSERKEALDSDVDDILDEIDDVLE). Glutamate 65 participates in a covalent cross-link: Isoglutamyl lysine isopeptide (Glu-Lys) (interchain with K-? in acceptor proteins).

The protein belongs to the prokaryotic ubiquitin-like protein family. As to quaternary structure, strongly interacts with the proteasome-associated ATPase ARC through a hydrophobic interface; the interacting region of Pup lies in its C-terminal half. There is one Pup binding site per ARC hexamer ring.

The protein operates within protein degradation; proteasomal Pup-dependent pathway. Functionally, protein modifier that is covalently attached to lysine residues of substrate proteins, thereby targeting them for proteasomal degradation. The tagging system is termed pupylation. The protein is Prokaryotic ubiquitin-like protein Pup of Nocardioides sp. (strain ATCC BAA-499 / JS614).